A 300-amino-acid polypeptide reads, in one-letter code: Ribonuclease HIII (300 aa).

Residues 86–300 (RPRLGVDESG…FNEICDSASA (215 aa)) enclose the RNase H type-2 domain. A divalent metal cation-binding residues include Asp92, Glu93, and Asp196.

It belongs to the RNase HII family. RnhC subfamily. Requires Mn(2+) as cofactor. The cofactor is Mg(2+).

The protein resides in the cytoplasm. It carries out the reaction Endonucleolytic cleavage to 5'-phosphomonoester.. Its function is as follows. Endonuclease that specifically degrades the RNA of RNA-DNA hybrids. The protein is Ribonuclease HIII of Chlamydia caviae (strain ATCC VR-813 / DSM 19441 / 03DC25 / GPIC) (Chlamydophila caviae).